A 337-amino-acid polypeptide reads, in one-letter code: 4-hydroxythreonine-4-phosphate dehydrogenase (337 aa).

Residues H139 and T140 each coordinate substrate. The a divalent metal cation site is built by H173, H218, and H273. Residues K281, N290, and R299 each contribute to the substrate site.

Belongs to the PdxA family. As to quaternary structure, homodimer. It depends on Zn(2+) as a cofactor. The cofactor is Mg(2+). Requires Co(2+) as cofactor.

The protein resides in the cytoplasm. It catalyses the reaction 4-(phosphooxy)-L-threonine + NAD(+) = 3-amino-2-oxopropyl phosphate + CO2 + NADH. Its pathway is cofactor biosynthesis; pyridoxine 5'-phosphate biosynthesis; pyridoxine 5'-phosphate from D-erythrose 4-phosphate: step 4/5. Catalyzes the NAD(P)-dependent oxidation of 4-(phosphooxy)-L-threonine (HTP) into 2-amino-3-oxo-4-(phosphooxy)butyric acid which spontaneously decarboxylates to form 3-amino-2-oxopropyl phosphate (AHAP). This is 4-hydroxythreonine-4-phosphate dehydrogenase from Rhodopseudomonas palustris (strain ATCC BAA-98 / CGA009).